Here is a 298-residue protein sequence, read N- to C-terminus: N-acetylmuramic acid 6-phosphate etherase (298 aa).

Residues 55–218 (ASKRYREGGR…STGVMIKQGK (164 aa)) form the SIS domain. The Proton donor role is filled by Glu-83. Residue Glu-114 is part of the active site.

The protein belongs to the GCKR-like family. MurNAc-6-P etherase subfamily. As to quaternary structure, homodimer.

The enzyme catalyses N-acetyl-D-muramate 6-phosphate + H2O = N-acetyl-D-glucosamine 6-phosphate + (R)-lactate. It functions in the pathway amino-sugar metabolism; N-acetylmuramate degradation. In terms of biological role, specifically catalyzes the cleavage of the D-lactyl ether substituent of MurNAc 6-phosphate, producing GlcNAc 6-phosphate and D-lactate. The chain is N-acetylmuramic acid 6-phosphate etherase from Lactobacillus johnsonii (strain CNCM I-12250 / La1 / NCC 533).